Consider the following 514-residue polypeptide: MSSPRGASSMSSRSPVNLEPESDSVDSEWVFGKYRLLGALRSATLEGEDLEGGIPQELLNVLVLYEKMKSTKSELSGFVTYLALMTLGIFDFDRSLKRLVDEGVLGMFRFNRMLTRVFFGYATGDDALIEGLLDTWFAFMVLLARFPVIPAQLIDSNFCVLCMYESDHSLATADTRFKTILCDHFTEASVTAGGDPCDSAEVTAVVKKTTQIDLSLDDFHERVARGDNVRELAVKRDTTLTTRKNGSINNFTKALNRARETCAMDRMESSLVEFQKKLREVNNMINRLTNPKNLNIFAAELFNVFVHAHHRRKTIRERLSDGLGDWKGRAAHMLFLTTKLRTAVDKNLLTTIITEFYAAAVPPVYRYNHKYNMHAHRVIFFKHMESIGFTNEGITAFQYQLNQVDLREVVGQDYRSDIIPITTNAENFNRLTELFWVIANICTFIFIHNKTIKLHHGDAPDLNIDELPDGLYLFNGSVGFKHDNGETRSGVWSSERTLDLLDTYDQLLSTGVIG.

The span at methionine 1–proline 15 shows a compositional bias: low complexity. Residues methionine 1 to serine 22 form a disordered region.

This is an uncharacterized protein from Ictaluridae (bullhead catfishes).